Reading from the N-terminus, the 238-residue chain is E3 ubiquitin-protein ligase ZNRF2 (238 aa).

The disordered stretch occupies residues methionine 1–leucine 137. The N-myristoyl glycine moiety is linked to residue glycine 2. Phosphoserine is present on residues serine 20, serine 24, serine 75, serine 82, serine 107, serine 110, serine 141, serine 147, and serine 189. The span at glycine 35–glycine 77 shows a compositional bias: low complexity. The RING-type; atypical zinc-finger motif lies at cysteine 195–proline 236.

In terms of assembly, interacts with UBE2N. Interacts with ZNRF1. Interacts (when phosphorylated) with YWHAE. Post-translationally, phosphorylated; leading to binding to YWHAE. Phosphorylated by MTOR at Ser-147 and dephosphorylated by PP6C. Ser-147 phosphorylation stimulates vesicle-to-cytosol translocation. As to expression, expressed primarily in the nervous system. Expression is more intense in the granular cell layer of hippocampus, Purkinje cell layer of the cerebellum and the granular cell layer of the olfactory bulb. Detected in sensory neurons but not expressed in sympatic or enteric neurons. Expressed in testis, adipose tissue, columnar epithelial cells of the gut.

It is found in the endosome membrane. Its subcellular location is the lysosome membrane. The protein localises to the presynaptic cell membrane. The protein resides in the cytoplasm. The catalysed reaction is S-ubiquitinyl-[E2 ubiquitin-conjugating enzyme]-L-cysteine + [acceptor protein]-L-lysine = [E2 ubiquitin-conjugating enzyme]-L-cysteine + N(6)-ubiquitinyl-[acceptor protein]-L-lysine.. It participates in protein modification; protein ubiquitination. Functionally, E3 ubiquitin-protein ligase that plays a role in the establishment and maintenance of neuronal transmission and plasticity. Ubiquitinates the Na(+)/K(+) ATPase alpha-1 subunit/ATP1A1 and thereby influences its endocytosis and/or degradation. Also acts as a positive regulator of mTORC1 activation by amino acids, which functions upstream of the V-ATPase and of Rag-GTPases. In turn, phosphorylation by mTOR leads to its inhibition via targeting to the cytosol allowing a self-regulating feedback mechanism. The sequence is that of E3 ubiquitin-protein ligase ZNRF2 (Znrf2) from Mus musculus (Mouse).